Consider the following 1255-residue polypeptide: RNA-directed RNA polymerase (1255 aa).

The 209-residue stretch at 548-756 (LIPLGLSPYA…QQRVSCGTFV (209 aa)) folds into the RdRp catalytic domain.

Its subcellular location is the virion. It carries out the reaction RNA(n) + a ribonucleoside 5'-triphosphate = RNA(n+1) + diphosphate. In terms of biological role, RNA-directed RNA polymerase that is involved in transcription and genome replication. Following infection, it catalyzes the synthesis of fully conservative plus strands. After core assembly, which consists in recruitment of one capped plus-strand for each genomic segments and polymerase complexes, the polymerase switches mode and catalyzes the synthesis of complementary minus-strands. In Oryza latifolia (Indian wild rice), this protein is RNA-directed RNA polymerase.